The primary structure comprises 241 residues: LexA repressor (241 aa).

The H-T-H motif DNA-binding region spans F41–Q61. Active-site for autocatalytic cleavage activity residues include S165 and K202.

Belongs to the peptidase S24 family. As to quaternary structure, homodimer.

It catalyses the reaction Hydrolysis of Ala-|-Gly bond in repressor LexA.. Functionally, represses a number of genes involved in the response to DNA damage (SOS response), including recA and lexA. In the presence of single-stranded DNA, RecA interacts with LexA causing an autocatalytic cleavage which disrupts the DNA-binding part of LexA, leading to derepression of the SOS regulon and eventually DNA repair. This is LexA repressor from Bifidobacterium longum (strain DJO10A).